Here is a 517-residue protein sequence, read N- to C-terminus: Ribonuclease Y (517 aa).

Residues 1 to 21 (MIESLIALIAAIVGLGIGYLV) form a helical membrane-spanning segment. Positions 207–273 (LINVINIKND…TKVIELLVED (67 aa)) constitute a KH domain. The region spanning 333–426 (ALAHSLEVAH…VCAADTLSAA (94 aa)) is the HD domain.

This sequence belongs to the RNase Y family.

The protein localises to the cell membrane. Its function is as follows. Endoribonuclease that initiates mRNA decay. In Campylobacter jejuni subsp. jejuni serotype O:23/36 (strain 81-176), this protein is Ribonuclease Y.